Consider the following 860-residue polypeptide: MSNSLPVPMSLNEYLAHLPMSDEQRAELAGCTTFAELHERLSAQPVTDPAEAAQASVGRRLTLTTADQLEDAEMLGVDASGRLCLKATPPIRRTKVVPEPWRTNILVRGWRRLTGKGNPPKPEHDDLPRDLPKARWRTVGSIRRYILLILMLGQTIVAGWYMKGILPYQGWSLVSLDEITRQTFVQTALQVMPYALQTSILLLFGILFCWVSAGFWTALMGFLELLTGRDKYRISGASAGNEPIEKGARTALVMPICNEDVPRVFAGLRATFESVAATGDLDRFDFFVLSDTNETDIAVAEQQAWLDVCRETKGFGKIFYRRRRRRVKRKSGNLDDFCRRWGGDYRYMVVLDADSVMSGECLTSLVRLMEATPDAGIIQTAPRASGMDTLYARMQQFATRVYGPLFTAGLHFWQLGESHYWGHNAIIRMKPFIEHCALAPLPGKGAFAGAILSHDFVEAALMRRAGWGVWIAYDLPGSYEELPPNLLDELKRDRRWCHGNLMNFRLFLVKGMHPVHRAVFLTGVMSYLSAPLWFFFLVLSTALLAVNTLMEPTYFLEPRQLYPLWPQWHPEKAVALFSTTIVLLFLPKLLSVILIWAKGAKGFGGKFKVTVSMLLEMLFSVLLAPVRMLFHTRFVLAAFLGWAATWNSPQRDDDSTPWIEAVKRHGPQTLLGACWALLVFWLNPSFLWWLAPIVVSLMLSIPVSVISSRTNLGVKARDEKFFLIPEEFEPPQELISTDRYTYENRWHALKQGFIRAVVDPRQNALACALATSRHRQAQPIEVVRMERVDQALKVGPAKLGNQERLMLLSDPVALGRLHERVWSEGHEEWLAAWRASIEADPHAPLLPLQPEGKASEPVPV.

6 helical membrane-spanning segments follow: residues 146–166 (ILLILMLGQTIVAGWYMKGIL), 200–220 (ILLLFGILFCWVSAGFWTALM), 519–539 (VFLTGVMSYLSAPLWFFFLVL), 576–596 (LFSTTIVLLFLPKLLSVILIW), 610–630 (TVSMLLEMLFSVLLAPVRMLF), and 686–706 (FLWWLAPIVVSLMLSIPVSVI).

The protein belongs to the glycosyltransferase 2 family. OpgH subfamily.

The protein resides in the cell inner membrane. It participates in glycan metabolism; osmoregulated periplasmic glucan (OPG) biosynthesis. Involved in the biosynthesis of osmoregulated periplasmic glucans (OPGs). The chain is Glucans biosynthesis glucosyltransferase H from Pseudomonas syringae pv. syringae (strain B728a).